Here is a 678-residue protein sequence, read N- to C-terminus: MNVLFLSYNICILFFVVCTLNFSTKCFSNGLLKNQNILNKSFDSITGRLLNETELEKNKDDNSKSETLLKEEKDEKDDVPTTSNDNLKNAHNNNEISSSTDPTNIINVNDKDNENSVDKKKDKKEKKHKKDKKEKKEKKDKKEKKDKKEKKHKKEKKHKKDKKKKENSEVMSLYKTGQHKPKNATEHGEENLDEEMVSEINNNAQGGLLLSSPYQYREQGGCGIISSVHETSNDTKDNDKENISEDKKEDHQQEEMLKTLDKKERKQKEKEMKEQEKIEKKKKKQEEKEKKKQEKERKKQEKKERKQKEKEMKKQKKIEKERKKKEEKEKKKKKHDKENEETMQQPDQTSEETNNEIMVPLPSPLTDVTTPEEHKEGEHKEEEHKEGEHKEGEHKEEEHKEEEHKKEEHKSKEHKSKGKKDKGKKDKGKHKKAKKEKVKKHVVKNVIEDEDKDGVEIINLEDKEACEEQHITVESRPLSQPQCKLIDEPEQLTLMDKSKVEEKNLSIQEQLIGTIGRVNVVPRRDNHKKKMAKIEEAELQKQKHVDKEEDKKEESKEVQEESKEVQEDEEEVEEDEEEEEEEEEEEEEEEEEEEEEEEEEEEEEEDEDEEDEDDAEEDEDDAEEDEDDAEEDDDEEDDDEEDDDEDEDEDEEDEEEEEEEEEESEKKIKRNLRKNAKI.

Residues 1 to 25 form the signal peptide; sequence MNVLFLSYNICILFFVVCTLNFSTK. Basic and acidic residues predominate over residues 56–79; the sequence is EKNKDDNSKSETLLKEEKDEKDDV. 3 disordered regions span residues 56–194, 225–445, and 520–678; these read EKNK…NLDE, ISSV…VVKN, and VVPR…NAKI. Positions 80–107 are enriched in polar residues; sequence PTTSNDNLKNAHNNNEISSSTDPTNIIN. Residues 109–120 show a composition bias toward basic and acidic residues; it reads NDKDNENSVDKK. A run of 15 repeats spans residues 120 to 122, 123 to 125, 126 to 128, 129 to 131, 132 to 134, 135 to 137, 138 to 140, 141 to 143, 144 to 146, 147 to 149, 150 to 152, 153 to 155, 156 to 158, 159 to 161, and 162 to 164. Residues 120–164 are 15 X 3 AA tandem repeats of K-K-[DEHK]; it reads KKDKKEKKHKKDKKEKKEKKDKKEKKDKKEKKHKKEKKHKKDKKK. A compositionally biased stretch (basic residues) spans 121 to 165; it reads KDKKEKKHKKDKKEKKEKKDKKEKKDKKEKKHKKEKKHKKDKKKK. Composition is skewed to basic and acidic residues over residues 231–329 and 371–411; these read TSND…EEKE and PEEH…EHKS. 14 consecutive repeat copies span residues 372-376, 377-381, 382-386, 387-391, 392-396, 397-401, 402-406, 407-411, 412-416, 417-421, 422-426, 427-431, 432-436, and 437-441. Residues 372–416 form a 9 X 5 AA tandem repeats of [EGK]-E-H-K-[EKS] region; the sequence is EEHKEGEHKEEEHKEGEHKEGEHKEEEHKEEEHKKEEHKSKEHKS. Residues 412-443 show a composition bias toward basic residues; it reads KEHKSKGKKDKGKKDKGKHKKAKKEKVKKHVV. Residues 417–441 are 5 X 5 AA tandem repeats of K-[GAV]-K-[KH]-[DKEH]; it reads KGKKDKGKKDKGKHKKAKKEKVKKH. Residues 532–565 are compositionally biased toward basic and acidic residues; that stretch reads AKIEEAELQKQKHVDKEEDKKEESKEVQEESKEV. Over residues 566-663 the composition is skewed to acidic residues; that stretch reads QEDEEEVEED…EEEEEEEEEE (98 aa). Basic residues predominate over residues 667–678; it reads KIKRNLRKNAKI.

The sequence is that of Glutamic acid-rich protein (GARP) from Plasmodium falciparum (isolate FC27 / Papua New Guinea).